The chain runs to 65 residues: Large ribosomal subunit protein uL29 (65 aa).

The protein belongs to the universal ribosomal protein uL29 family.

The polypeptide is Large ribosomal subunit protein uL29 (Mycoplasmopsis pulmonis (strain UAB CTIP) (Mycoplasma pulmonis)).